We begin with the raw amino-acid sequence, 327 residues long: Nuclear apoptosis-inducing factor 1 (327 aa).

Positions 1–70 are required for nuclear localization and apoptosis-inducing activity; it reads MAVPAKKRKM…CRRELPEVKK (70 aa). Positions 87–98 are enriched in low complexity; that stretch reads RAAVEGGEAPGP. Disordered regions lie at residues 87–118 and 303–327; these read RAAVEGGEAPGPTEEDGAGGPGTGGGSGGGGP and NTANPAPASDPGQVAQNGQPDSIIQ. Over residues 104 to 118 the composition is skewed to gly residues; sequence AGGPGTGGGSGGGGP. Polar residues predominate over residues 316–327; sequence VAQNGQPDSIIQ.

The protein belongs to the NAIF1 family. As to quaternary structure, interacts with HARBI1. Widely expressed.

It is found in the nucleus. Functionally, induces apoptosis. The protein is Nuclear apoptosis-inducing factor 1 (NAIF1) of Homo sapiens (Human).